A 100-amino-acid polypeptide reads, in one-letter code: Small ribosomal subunit protein uS14c (100 aa).

Belongs to the universal ribosomal protein uS14 family. In terms of assembly, part of the 30S ribosomal subunit.

Its subcellular location is the plastid. The protein resides in the chloroplast. Its function is as follows. Binds 16S rRNA, required for the assembly of 30S particles. The sequence is that of Small ribosomal subunit protein uS14c from Ostreococcus tauri.